We begin with the raw amino-acid sequence, 504 residues long: UDP-N-acetylmuramoylalanine--D-glutamate ligase (504 aa).

G132–T138 is a binding site for ATP. The span at D286–P295 shows a compositional bias: basic and acidic residues. The interval D286–T305 is disordered.

It belongs to the MurCDEF family.

It is found in the cytoplasm. It catalyses the reaction UDP-N-acetyl-alpha-D-muramoyl-L-alanine + D-glutamate + ATP = UDP-N-acetyl-alpha-D-muramoyl-L-alanyl-D-glutamate + ADP + phosphate + H(+). It participates in cell wall biogenesis; peptidoglycan biosynthesis. In terms of biological role, cell wall formation. Catalyzes the addition of glutamate to the nucleotide precursor UDP-N-acetylmuramoyl-L-alanine (UMA). This Paraburkholderia xenovorans (strain LB400) protein is UDP-N-acetylmuramoylalanine--D-glutamate ligase.